The following is a 960-amino-acid chain: Isoleucine--tRNA ligase (960 aa).

Positions 82 to 92 (PYANGHIHIGH) match the 'HIGH' region motif. Glu606 is an L-isoleucyl-5'-AMP binding site. The 'KMSKS' region motif lies at 647 to 651 (KMSKS). Position 650 (Lys650) interacts with ATP. Zn(2+) is bound by residues Cys931, Cys934, Cys951, and Cys954.

The protein belongs to the class-I aminoacyl-tRNA synthetase family. IleS type 1 subfamily. As to quaternary structure, monomer. The cofactor is Zn(2+).

The protein localises to the cytoplasm. It catalyses the reaction tRNA(Ile) + L-isoleucine + ATP = L-isoleucyl-tRNA(Ile) + AMP + diphosphate. Catalyzes the attachment of isoleucine to tRNA(Ile). As IleRS can inadvertently accommodate and process structurally similar amino acids such as valine, to avoid such errors it has two additional distinct tRNA(Ile)-dependent editing activities. One activity is designated as 'pretransfer' editing and involves the hydrolysis of activated Val-AMP. The other activity is designated 'posttransfer' editing and involves deacylation of mischarged Val-tRNA(Ile). The polypeptide is Isoleucine--tRNA ligase (Gluconobacter oxydans (strain 621H) (Gluconobacter suboxydans)).